A 345-amino-acid polypeptide reads, in one-letter code: Phosphoribosylformylglycinamidine cyclo-ligase (345 aa).

This sequence belongs to the AIR synthase family.

It localises to the cytoplasm. It catalyses the reaction 2-formamido-N(1)-(5-O-phospho-beta-D-ribosyl)acetamidine + ATP = 5-amino-1-(5-phospho-beta-D-ribosyl)imidazole + ADP + phosphate + H(+). Its pathway is purine metabolism; IMP biosynthesis via de novo pathway; 5-amino-1-(5-phospho-D-ribosyl)imidazole from N(2)-formyl-N(1)-(5-phospho-D-ribosyl)glycinamide: step 2/2. In Cronobacter sakazakii (strain ATCC BAA-894) (Enterobacter sakazakii), this protein is Phosphoribosylformylglycinamidine cyclo-ligase.